The sequence spans 168 residues: Ribosome maturation factor RimP (168 aa).

The protein belongs to the RimP family.

The protein localises to the cytoplasm. In terms of biological role, required for maturation of 30S ribosomal subunits. The polypeptide is Ribosome maturation factor RimP (Bordetella parapertussis (strain 12822 / ATCC BAA-587 / NCTC 13253)).